Here is a 743-residue protein sequence, read N- to C-terminus: MEKPPVQHGAVCGPWDMKDRLGTGGFGNVCLYQNRETGELKAIKSCRLELSMKNKERWCQEIQIMKRLNHPNVVKACEVPPEMDFLVNDVPHLAMEYCAGGDLRKLLNKPENCCGLKESQVLNLMSDIGSGIQYLHEKRIIHRDLKPENIVLQECNGKTVHKIIDLGYAKDLDQGSLCTSFVGTLQYLAPELFENKPYSVTVDYWSFGTMVFECIAGFRPFLHNMQPFTWHEKIKKKDHKHIYAYEEMSGEIRFSSYLPQPNNLCSIIVDKIETWLQLLLNWDPIQRGGGMDCGRPQCFVLMDQILNLKIVHILNMTSAKIHSFHLQPEESLHTLQSRIETETGISTCNQELLLEMGVSLDPRKPASQCVIDGVKGWDSYMVYLFDKSKTVYEGPFQSRSLSECLNYIVQDSKVQLPIPQLRKVWAEAVHYVSGLKEDYSRLFQGQRAAMLSLLRFNTNLTKMKNTMVSASQQLGAKLQFFKRSIEIDLERYSDQMAYGISSEKMLRAWKEMEDKAVCFGKAGKIHFLDETIMGLHTEIVELQKSPCARRQGDVMEHLEQRAMELYKQLKPRSPDKAYSDSTEMVKILVQTVQGQDRVLKELFGHLSKLLGCKQKIIDLLPQIEMTVNNIKEADSSLMQMQAKRQREIWHLLKIACTQSSARSLGPASVETPITPRTSAWPDQSSSQALFSMLTTKDKSREILRHTIDKNSDYQKLLSSLILQTQTTMEQNSLMSLDFSWLNK.

The 286-residue stretch at 15-300 folds into the Protein kinase domain; sequence WDMKDRLGTG…MDCGRPQCFV (286 aa). Residues 21-29 and lysine 44 each bind ATP; that span reads LGTGGFGNV. Aspartate 144 acts as the Proton acceptor in catalysis. The interval 453-474 is leucine-zipper; it reads LLRFNTNLTKMKNTMVSASQQL. An NEMO-binding region spans residues 736-741; it reads LDFSWL.

The protein belongs to the protein kinase superfamily. Ser/Thr protein kinase family. I-kappa-B kinase subfamily.

The protein localises to the cytoplasm. It is found in the nucleus. The enzyme catalyses L-seryl-[I-kappa-B protein] + ATP = O-phospho-L-seryl-[I-kappa-B protein] + ADP + H(+). With respect to regulation, activated when phosphorylated and inactivated when dephosphorylated. Functionally, phosphorylates inhibitors of NF-kappa-B thus leading to the dissociation of the inhibitor/NF-kappa-B complex and ultimately the degradation of the inhibitor. Phosphorylates 'Ser-10' of histone H3 at NF-kappa-B-regulated promoters during inflammatory responses triggered by cytokines. This Xenopus tropicalis (Western clawed frog) protein is Inhibitor of nuclear factor kappa-B kinase subunit alpha (chuk).